The sequence spans 238 residues: MSALRLRKVDALLAQATRELGAGQSLGFSAAGQDAELTLLPLLADAGEPAGAVWLSTAIGPLLLSDAEALLSLLGDIPLTLGGEQQAWYWQLFNQRLSPTVARLLAPVEPLHNKPQAPTLGCRVQIRRGGEQLHAHMHATPDTLLRLLRSASWQARTRTVDESWSVASPLIIGEMSLTREQIASLRPGDVVLPAHCQFDSAGQGFLSLAGRQWAAQTDQHAQRLFLRLSHEEHRHHEY.

Positions 66–238 are hrcQa-C; it reads DAEALLSLLG…SHEEHRHHEY (173 aa).

In terms of assembly, interacts with hrcQb.

It localises to the cell inner membrane. Its function is as follows. Component of the type III secretion system, which is required for effector protein delivery, parasitism, and pathogenicity. Probably participates in the formation of a C-ring-like assembly along with hrcQb. This chain is Type III secretion protein hrcQa (hrcQa), found in Pseudomonas savastanoi pv. phaseolicola (Pseudomonas syringae pv. phaseolicola).